A 423-amino-acid polypeptide reads, in one-letter code: ATP-dependent Clp protease ATP-binding subunit ClpX (423 aa).

Residues 1-50 enclose the ClpX-type ZB domain; the sequence is MTDDTEYRCSFCGKEHHQVDDLIAGPDVRICSECVVLSCEIVEDRRNEAL. Positions 9, 12, 31, and 34 each coordinate Zn(2+). 126–133 is a binding site for ATP; the sequence is PTGCGKTY.

Belongs to the ClpX chaperone family. Component of the ClpX-ClpP complex. Forms a hexameric ring that, in the presence of ATP, binds to fourteen ClpP subunits assembled into a disk-like structure with a central cavity, resembling the structure of eukaryotic proteasomes.

Functionally, ATP-dependent specificity component of the Clp protease. It directs the protease to specific substrates. Can perform chaperone functions in the absence of ClpP. The sequence is that of ATP-dependent Clp protease ATP-binding subunit ClpX from Tropheryma whipplei (strain TW08/27) (Whipple's bacillus).